Reading from the N-terminus, the 68-residue chain is Protein P34 (68 aa).

The next 2 membrane-spanning stretches (helical) occupy residues 4–24 (FVGP…LAVL) and 41–61 (GFSS…GFAM).

The protein resides in the virion membrane. In Acinetobacter calcoaceticus (Arthrobacter siderocapsulatus), this protein is Protein P34 (XXXIV).